Here is a 520-residue protein sequence, read N- to C-terminus: Transactivator/viroplasmin protein (520 aa).

Disordered stretches follow at residues glycine 32–alanine 51 and glutamine 487–aspartate 520. The span at serine 40 to alanine 51 shows a compositional bias: basic and acidic residues.

This sequence belongs to the caulimoviridae viroplasmin family.

The protein localises to the host cytoplasm. Functionally, enhances the ribosomal termination-reinitiation event leading to the translation of major open reading frames on the polycistronic viral RNAs. This is Transactivator/viroplasmin protein from Arabidopsis thaliana (Mouse-ear cress).